The chain runs to 102 residues: uncharacterized protein (102 aa).

Residues 36–55 form a helical membrane-spanning segment; the sequence is IISLLAIFIKMCLWLWKQFL.

The protein resides in the membrane. This is an uncharacterized protein from Homo sapiens (Human).